Consider the following 196-residue polypeptide: Carnitine operon protein CaiE (196 aa).

The tract at residues 173-196 (TQPLRQMEGNRPRLQGTTDVAPKR) is disordered.

This sequence belongs to the transferase hexapeptide repeat family.

Its pathway is amine and polyamine metabolism; carnitine metabolism. In terms of biological role, overproduction of CaiE stimulates the activity of CaiB and CaiD. The chain is Carnitine operon protein CaiE from Escherichia coli (strain SMS-3-5 / SECEC).